Consider the following 226-residue polypeptide: 7-cyano-7-deazaguanine synthase (226 aa).

An ATP-binding site is contributed by 10–20 (LSGGLDSATAA). The Zn(2+) site is built by Cys191, Cys199, Cys202, and Cys205.

Belongs to the QueC family. Requires Zn(2+) as cofactor.

It carries out the reaction 7-carboxy-7-deazaguanine + NH4(+) + ATP = 7-cyano-7-deazaguanine + ADP + phosphate + H2O + H(+). It functions in the pathway purine metabolism; 7-cyano-7-deazaguanine biosynthesis. Its function is as follows. Catalyzes the ATP-dependent conversion of 7-carboxy-7-deazaguanine (CDG) to 7-cyano-7-deazaguanine (preQ(0)). This Synechococcus sp. (strain CC9311) protein is 7-cyano-7-deazaguanine synthase.